The primary structure comprises 779 residues: uncharacterized protein (779 aa).

A phosphoserine mark is found at Ser-97 and Ser-120. Residues 125–135 are compositionally biased toward basic and acidic residues; that stretch reads EIDGEDEKKSV. Residues 125–174 are disordered; sequence EIDGEDEKKSVGQESITGSAKRKDRRSKTNGSKRQKAEANREPPSDISLS. Over residues 144-158 the composition is skewed to basic residues; the sequence is AKRKDRRSKTNGSKR. A compositionally biased stretch (basic and acidic residues) spans 159–168; sequence QKAEANREPP. ATP is bound by residues 215-222 and 533-540; these read GPPGCGKT. The tract at residues 759 to 779 is disordered; it reads DRQKYQRLAKRWSSASTNDAD.

This sequence belongs to the AAA ATPase family.

The protein resides in the nucleus. This is an uncharacterized protein from Schizosaccharomyces pombe (strain 972 / ATCC 24843) (Fission yeast).